A 255-amino-acid chain; its full sequence is Flap endonuclease Xni (255 aa).

A Mg(2+)-binding site is contributed by D105. One can recognise a 5'-3' exonuclease domain in the interval 162–254; that stretch reads EHKQFIDYLA…LKQFRLPKAN (93 aa). Positions 172, 173, 181, 183, and 186 each coordinate K(+). Residues 185–190 are interaction with DNA; that stretch reads GIGPKS.

Belongs to the Xni family. Mg(2+) serves as cofactor. Requires K(+) as cofactor.

Its function is as follows. Has flap endonuclease activity. During DNA replication, flap endonucleases cleave the 5'-overhanging flap structure that is generated by displacement synthesis when DNA polymerase encounters the 5'-end of a downstream Okazaki fragment. The protein is Flap endonuclease Xni of Shewanella piezotolerans (strain WP3 / JCM 13877).